The chain runs to 617 residues: Proline--tRNA ligase (617 aa).

The protein belongs to the class-II aminoacyl-tRNA synthetase family. ProS type 1 subfamily. Homodimer.

Its subcellular location is the cytoplasm. It carries out the reaction tRNA(Pro) + L-proline + ATP = L-prolyl-tRNA(Pro) + AMP + diphosphate. Its function is as follows. Catalyzes the attachment of proline to tRNA(Pro) in a two-step reaction: proline is first activated by ATP to form Pro-AMP and then transferred to the acceptor end of tRNA(Pro). As ProRS can inadvertently accommodate and process non-cognate amino acids such as alanine and cysteine, to avoid such errors it has two additional distinct editing activities against alanine. One activity is designated as 'pretransfer' editing and involves the tRNA(Pro)-independent hydrolysis of activated Ala-AMP. The other activity is designated 'posttransfer' editing and involves deacylation of mischarged Ala-tRNA(Pro). The misacylated Cys-tRNA(Pro) is not edited by ProRS. This is Proline--tRNA ligase from Streptococcus agalactiae serotype V (strain ATCC BAA-611 / 2603 V/R).